A 457-amino-acid chain; its full sequence is Argininosuccinate lyase (457 aa).

Belongs to the lyase 1 family. Argininosuccinate lyase subfamily.

The protein resides in the cytoplasm. It catalyses the reaction 2-(N(omega)-L-arginino)succinate = fumarate + L-arginine. The protein operates within amino-acid biosynthesis; L-arginine biosynthesis; L-arginine from L-ornithine and carbamoyl phosphate: step 3/3. This Yersinia pseudotuberculosis serotype O:1b (strain IP 31758) protein is Argininosuccinate lyase.